The primary structure comprises 321 residues: MQYKKETLLLILLAILLALTQRYSRTKDHLQKMYTCWRDHLEEPQLESWFNPKKRPDVIATTGWLAPVLWEGTYDREVLEQYYKRLNITVGLAVFATGNFSSESLRRFIKSANKYFMVGYNVIFYILADGTSNLPYLELGPLRTLKMWRLSGEEMTYEDSNLRNMNNMRYKIMEHIQYEVNFLFVMTANQIIKNHFGVETLGRSVAQLHAWWYFKQPREFPYERRRKASAFIAFEEGDFYYHSAIVGGTPLDVLDLIEHYIKGIIDDRTNELSSTYERHLNKYFFIKKPVRVLSPEYNWDPRFKTPPEIWHIKVAWQPRIT.

Topologically, residues 1-6 (MQYKKE) are cytoplasmic. The chain crosses the membrane as a helical; Signal-anchor for type II membrane protein span at residues 7-24 (TLLLILLAILLALTQRYS). Residues 25-321 (RTKDHLQKMY…IKVAWQPRIT (297 aa)) lie on the Lumenal side of the membrane. 2 N-linked (GlcNAc...) asparagine glycosylation sites follow: N87 and N99. Residues 95-100 (FATGNF), 187-189 (TAN), and 209-212 (HAWW) each bind substrate. Residue E277 is the Nucleophile of the active site.

It belongs to the glycosyltransferase 6 family. Mn(2+) is required as a cofactor.

The protein resides in the golgi apparatus. The protein localises to the golgi stack membrane. It catalyses the reaction a beta-D-galactosyl-(1-&gt;4)-N-acetyl-beta-D-glucosaminyl derivative + UDP-alpha-D-galactose = an alpha-D-galactosyl-(1-&gt;3)-beta-D-galactosyl-(1-&gt;4)-N-acetyl-beta-D-glucosaminyl derivative + UDP + H(+). It functions in the pathway protein modification; protein glycosylation. Functionally, synthesizes the galactose-alpha(1,3)-galactose group by catalyzing the transfer of a galactose residue, with an alpha-1,3 linkage, on terminal lactosaminide (Gal-beta-1,4-GlcNAc-R) disaccharide borne by a glycoprotein or a glycolipid. The sequence is that of N-acetyllactosaminide alpha-1,3-galactosyltransferase-like 1 (Ggta1l1) from Rattus norvegicus (Rat).